The chain runs to 424 residues: MFS-type transporter opdF (424 aa).

A compositionally biased stretch (basic and acidic residues) spans 1-10; sequence MSDTSLEKGN. A disordered region spans residues 1–23; the sequence is MSDTSLEKGNEGPTAEAPKVAPP. The next 5 helical transmembrane spans lie at 36 to 56, 102 to 122, 127 to 147, 160 to 180, and 187 to 207; these read VAGASVALFVSFGWVNCIALF, VPIAIGSFLHVFGLMMASLST, LMLSQSVVSGIGSSLIFTPAM, IVGGLTVAGSSLGGVVFPLMV, and VGFGWTMRICAFMILGLLVFA. Residue Asn208 is glycosylated (N-linked (GlcNAc...) asparagine). Helical transmembrane passes span 239–259, 265–285, 299–319, 329–349, 364–384, and 391–411; these read LCVASFFMYWGIFIPFDYIVV, GMSTQMAWSLVPILNGASFFG, FNVMIVMTTLSAILVLALWLP, FAALFGITSGAIIGLGPVLIV, VLAFAAVGTLTSPPIGGAIAA, and TYTCVFSGVSFLIGTLGLAAL.

This sequence belongs to the major facilitator superfamily. Monocarboxylate porter (TC 2.A.1.13) family.

It is found in the membrane. Its function is as follows. MFS-type transporter; part of the gene cluster that mediates the biosynthesis of oxopyrrolidines, polyketide-amino acid hybrid compounds with feature structures of tetramic acid. The sequence is that of MFS-type transporter opdF from Penicillium oxalicum (strain 114-2 / CGMCC 5302) (Penicillium decumbens).